The following is a 429-amino-acid chain: MSGDIIDELTWRGLIAQSTDLDALRAALAAGPLTLYAGFDPTAASLHAGHLVPLLALKRFQRAGHRPIVLAGGATGLIGDPRDVGERTMNSSDTVAEWARRIRSQLERFVDLDDSPTGAVIVNNMDWTGPLSAVDFLRDIGKHFSVNVMLARDTVKRRLEGDGMSYTEFSYMLLQANDYVQLRRSFGCRLQVGGSDQWGNIIAGVELNRRLDGESVHALTVPLVTSADGKKFGKSTGGGSLWLDPEMTSPYAWYQYFVNTADADVVRYLRWFTFLDREELAELERATAERPHAREAQRRLAAEMTTLVHGEQHTRAVQLASQALFGRGDLRELDEATLGAALREAAGEGEVARVTPGEPATIVDLLVATGLAESRGAARRTVNEGGAAVNNQKIADPDWTPADGDYLHGRWLVVRRGKRNMAGVLRDGN.

Tyr36 is a binding site for L-tyrosine. A 'HIGH' region motif is present at residues 41 to 50; the sequence is PTAASLHAGH. Tyr171 and Gln175 together coordinate L-tyrosine. A 'KMSKS' region motif is present at residues 231 to 235; sequence KFGKS. Lys234 is a binding site for ATP. One can recognise an S4 RNA-binding domain in the interval 360–417; that stretch reads ATIVDLLVATGLAESRGAARRTVNEGGAAVNNQKIADPDWTPADGDYLHGRWLVVRRG.

This sequence belongs to the class-I aminoacyl-tRNA synthetase family. TyrS type 1 subfamily. Homodimer.

It is found in the cytoplasm. It catalyses the reaction tRNA(Tyr) + L-tyrosine + ATP = L-tyrosyl-tRNA(Tyr) + AMP + diphosphate + H(+). In terms of biological role, catalyzes the attachment of tyrosine to tRNA(Tyr) in a two-step reaction: tyrosine is first activated by ATP to form Tyr-AMP and then transferred to the acceptor end of tRNA(Tyr). The chain is Tyrosine--tRNA ligase from Nocardia farcinica (strain IFM 10152).